Reading from the N-terminus, the 200-residue chain is MKTVLAIFSSLNGTEGNSSKLANEYLLKIENDDSVRINRVDVASLALPHLTGEEMQAWMTDASERNESQHALAKISDNIVEAVKAADEIVLAVPMYNFGIPSSLKAYFDRIARAGITFKYTETGPVGLLENKSATVFAARGGVYAGSDFDTQTPYLKHFLNFIGISDVNFVYAEGLNMGEEQANSAFADANEKIIELTKG.

Residues Ser10 and Met95–Phe98 contribute to the FMN site.

Belongs to the azoreductase type 1 family. In terms of assembly, homodimer. FMN is required as a cofactor.

It carries out the reaction 2 a quinone + NADH + H(+) = 2 a 1,4-benzosemiquinone + NAD(+). The catalysed reaction is N,N-dimethyl-1,4-phenylenediamine + anthranilate + 2 NAD(+) = 2-(4-dimethylaminophenyl)diazenylbenzoate + 2 NADH + 2 H(+). Functionally, quinone reductase that provides resistance to thiol-specific stress caused by electrophilic quinones. Also exhibits azoreductase activity. Catalyzes the reductive cleavage of the azo bond in aromatic azo compounds to the corresponding amines. The protein is FMN-dependent NADH:quinone oxidoreductase of Alteromonas mediterranea (strain DSM 17117 / CIP 110805 / LMG 28347 / Deep ecotype).